Consider the following 242-residue polypeptide: tRNA (guanine-N(1)-)-methyltransferase (242 aa).

S-adenosyl-L-methionine is bound by residues G114 and 134-139; that span reads IGDFVL. Residues 223–233 show a composition bias toward basic and acidic residues; it reads RRDLLPEHSKN. The interval 223 to 242 is disordered; sequence RRDLLPEHSKNNPEQTNKLS.

The protein belongs to the RNA methyltransferase TrmD family. In terms of assembly, homodimer.

The protein resides in the cytoplasm. The catalysed reaction is guanosine(37) in tRNA + S-adenosyl-L-methionine = N(1)-methylguanosine(37) in tRNA + S-adenosyl-L-homocysteine + H(+). In terms of biological role, specifically methylates guanosine-37 in various tRNAs. The protein is tRNA (guanine-N(1)-)-methyltransferase of Rhodopirellula baltica (strain DSM 10527 / NCIMB 13988 / SH1).